The primary structure comprises 738 residues: Platelet endothelial cell adhesion molecule (738 aa).

Residues 1 to 27 form the signal peptide; it reads MQPRWAQGATMWLGVLLTLLLCSSLEG. The Extracellular portion of the chain corresponds to 28–601; the sequence is QENSFTINSV…VRVILAPWKK (574 aa). Ig-like C2-type domains are found at residues 35 to 121, 145 to 233, and 236 to 315; these read NSVD…KTTA, GGIV…TESF, and PKFH…SKVS. N-linked (GlcNAc...) asparagine glycosylation is found at Asn-52, Asn-84, and Asn-151. Residues Cys-57 and Cys-109 are joined by a disulfide bond. Cystine bridges form between Cys-152/Cys-206 and Cys-256/Cys-304. 6 N-linked (GlcNAc...) asparagine glycosylation sites follow: Asn-301, Asn-320, Asn-344, Asn-356, Asn-453, and Asn-551. 3 Ig-like C2-type domains span residues 328–401, 424–493, and 499–591; these read PELE…NTVQ, GQTI…EVLR, and PVDE…KILT. Intrachain disulfides connect Cys-347-Cys-386, Cys-431-Cys-476, and Cys-523-Cys-572. Residues 602–620 form a helical membrane-spanning segment; it reads GLIAVVIIGVIIALLIIAA. Over 621–738 the chain is Cytoplasmic; sequence KCYFLRKAKA…SRTEGSLDGT (118 aa). The S-palmitoyl cysteine moiety is linked to residue Cys-622. The disordered stretch occupies residues 658–715; the sequence is EANSHYGHNDDVRNHAMKPINDNKEPLNSDVQYTEVQVSSAESHKDLGKKDTETVYSE. Positions 686–698 are enriched in polar residues; it reads SDVQYTEVQVSSA. Short sequence motifs (ITIM motif) lie at residues 688 to 693 and 711 to 716; these read VQYTEV and TVYSEV. Phosphotyrosine; by FER occurs at positions 690 and 713. Residues 699-715 are compositionally biased toward basic and acidic residues; that stretch reads ESHKDLGKKDTETVYSE. Residues 709 to 729 are membrane-bound segment which detaches upon phosphorylation; the sequence is TETVYSEVRKAVPDAVESRYS. The tract at residues 721–738 is may play a role in cytoprotective signaling; sequence PDAVESRYSRTEGSLDGT. Phosphoserine occurs at positions 729 and 734.

In terms of assembly, trans-homodimer (via Ig-like C2-type 1 and Ig-like C2-type 2 domains); trans-homodimerization is required for cell-cell interaction. Forms a complex with BDKRB2 and GNAQ. Interacts with BDKRB2 and GNAQ. Interacts with PTPN11; Tyr-713 is critical for PTPN11 recruitment. Interacts with FER. Interacts (via Ig-like C2-type domain 6) with CD177; the interaction is Ca(2+)-dependent; the interaction is direct. Post-translationally, phosphorylated on Ser and Tyr residues after cellular activation by src kinases. Upon activation, phosphorylated on Ser-729 which probably initiates the dissociation of the membrane-interaction segment (residues 709-729) from the cell membrane allowing the sequential phosphorylation of Tyr-713 and Tyr-690. Constitutively phosphorylated on Ser-734 in resting platelets. Phosphorylated on tyrosine residues by FER and FES in response to FCER1 activation. In endothelial cells Fyn mediates mechanical-force (stretch or pull) induced tyrosine phosphorylation. Palmitoylation by ZDHHC21 is necessary for cell surface expression in endothelial cells and enrichment in membrane rafts. In terms of tissue distribution, expressed on platelets and leukocytes and is primarily concentrated at the borders between endothelial cells. Expressed in human umbilical vein endothelial cells (HUVECs) (at protein level). Expressed on neutrophils (at protein level). Isoform Long predominates in all tissues examined. Isoform Delta12 is detected only in trachea. Isoform Delta14-15 is only detected in lung. Isoform Delta14 is detected in all tissues examined with the strongest expression in heart. Isoform Delta15 is expressed in brain, testis, ovary, cell surface of platelets, human umbilical vein endothelial cells (HUVECs), Jurkat T-cell leukemia, human erythroleukemia (HEL) and U-937 histiocytic lymphoma cell lines (at protein level).

It is found in the cell membrane. The protein localises to the membrane raft. The protein resides in the cell junction. Cell adhesion molecule which is required for leukocyte transendothelial migration (TEM) under most inflammatory conditions. Tyr-690 plays a critical role in TEM and is required for efficient trafficking of PECAM1 to and from the lateral border recycling compartment (LBRC) and is also essential for the LBRC membrane to be targeted around migrating leukocytes. Trans-homophilic interaction may play a role in endothelial cell-cell adhesion via cell junctions. Heterophilic interaction with CD177 plays a role in transendothelial migration of neutrophils. Homophilic ligation of PECAM1 prevents macrophage-mediated phagocytosis of neighboring viable leukocytes by transmitting a detachment signal. Promotes macrophage-mediated phagocytosis of apoptotic leukocytes by tethering them to the phagocytic cells; PECAM1-mediated detachment signal appears to be disabled in apoptotic leukocytes. Modulates bradykinin receptor BDKRB2 activation. Regulates bradykinin- and hyperosmotic shock-induced ERK1/2 activation in endothelial cells. Induces susceptibility to atherosclerosis. In terms of biological role, does not protect against apoptosis. In Homo sapiens (Human), this protein is Platelet endothelial cell adhesion molecule (PECAM1).